Consider the following 1095-residue polypeptide: Mediator of RNA polymerase II transcription subunit 15 (1095 aa).

Over residues 66 to 83 (KSKIDAMRSTRDKRKRES) the composition is skewed to basic and acidic residues. 6 disordered regions span residues 66 to 197 (KSKI…LTQQ), 265 to 323 (QQQQ…RNPN), 448 to 508 (SAAD…LNPT), 633 to 672 (QQQQQQGMDPNRAQNSQQQQQQNQANMQQARNRKPTKNQT), 737 to 847 (PTMA…QPGN), and 1050 to 1075 (SEAAKGTNNSSLMDSGKEGSCKSMAG). Low complexity-rich tracts occupy residues 99–113 (NNNNNNNNNNNNNLN) and 133–154 (NSNANTNLNTNVGPGVNGPNGN). Residues 155 to 165 (DGTANPQMFMN) show a composition bias toward polar residues. Residues 166–178 (QQAQARQQAAARQ) are compositionally biased toward low complexity. Polar residues predominate over residues 448 to 473 (SAADSTMNNSNQPMNIGNNGVNMIPN). Composition is skewed to low complexity over residues 487–500 (QTPQQPQQRIQSNR), 633–662 (QQQQQQGMDPNRAQNSQQQQQQNQANMQQA), and 780–793 (PTPQVVPATVPSTT). 3 stretches are compositionally biased toward polar residues: residues 794-810 (NLSAAGTPNIRNKSATP), 817-847 (PKSTIRSNSNTALASAKTPSPMTVSIPQPGN), and 1050-1062 (SEAAKGTNNSSLM).

Belongs to the Mediator complex subunit 15 family. In terms of assembly, component of the Mediator complex.

It is found in the nucleus. Component of the Mediator complex, a coactivator involved in regulated gene transcription of nearly all RNA polymerase II-dependent genes. Mediator functions as a bridge to convey information from gene-specific regulatory proteins to the basal RNA polymerase II transcription machinery. Mediator is recruited to promoters by direct interactions with regulatory proteins and serves as a scaffold for the assembly of a functional preinitiation complex with RNA polymerase II and the general transcription factors. This chain is Mediator of RNA polymerase II transcription subunit 15 (GAL11), found in Candida glabrata (strain ATCC 2001 / BCRC 20586 / JCM 3761 / NBRC 0622 / NRRL Y-65 / CBS 138) (Yeast).